A 327-amino-acid chain; its full sequence is Thiamine thiazole synthase (327 aa).

Substrate contacts are provided by residues Cys86, 107 to 108 (EA), Gly115, and Val182. Cys216 carries the post-translational modification 2,3-didehydroalanine (Cys). Residues Asp218, His233, Met285, and 295–297 (RMG) contribute to the substrate site.

The protein belongs to the THI4 family. In terms of assembly, homooctamer. It depends on Fe cation as a cofactor. In terms of processing, during the catalytic reaction, a sulfide is transferred from Cys-216 to a reaction intermediate, generating a dehydroalanine residue.

The protein localises to the cytoplasm. Its subcellular location is the nucleus. The enzyme catalyses [ADP-thiazole synthase]-L-cysteine + glycine + NAD(+) = [ADP-thiazole synthase]-dehydroalanine + ADP-5-ethyl-4-methylthiazole-2-carboxylate + nicotinamide + 3 H2O + 2 H(+). In terms of biological role, involved in biosynthesis of the thiamine precursor thiazole. Catalyzes the conversion of NAD and glycine to adenosine diphosphate 5-(2-hydroxyethyl)-4-methylthiazole-2-carboxylic acid (ADT), an adenylated thiazole intermediate. The reaction includes an iron-dependent sulfide transfer from a conserved cysteine residue of the protein to a thiazole intermediate. The enzyme can only undergo a single turnover, which suggests it is a suicide enzyme. May have additional roles in adaptation to various stress conditions and in DNA damage tolerance. The polypeptide is Thiamine thiazole synthase (Aspergillus oryzae (strain ATCC 42149 / RIB 40) (Yellow koji mold)).